The chain runs to 897 residues: Translation initiation factor IF-2 (897 aa).

A disordered region spans residues 52 to 310 (EHGSAPDKLT…LLQQGFQKPA (259 aa)). Over residues 68–82 (STLNVPGTGGKSKSV) the composition is skewed to polar residues. 2 stretches are compositionally biased toward basic and acidic residues: residues 85–159 (EVRK…KDKV) and 166–217 (EMTK…ENEK). Residues 256–272 (GRTRTASKTARPQKKGN) show a composition bias toward basic residues. Residues 273–286 (KHAESKADREEARA) show a composition bias toward basic and acidic residues. The 170-residue stretch at 396–565 (PRAPVVTIMG…LLQAEVLELK (170 aa)) folds into the tr-type G domain. Positions 405–412 (GHVDHGKT) are G1. GTP is bound at residue 405 to 412 (GHVDHGKT). Residues 430–434 (GITQH) form a G2 region. The tract at residues 451-454 (DTPG) is G3. GTP contacts are provided by residues 451-455 (DTPGH) and 505-508 (NKID). A G4 region spans residues 505 to 508 (NKID). Positions 541–543 (SAK) are G5.

This sequence belongs to the TRAFAC class translation factor GTPase superfamily. Classic translation factor GTPase family. IF-2 subfamily.

The protein localises to the cytoplasm. Its function is as follows. One of the essential components for the initiation of protein synthesis. Protects formylmethionyl-tRNA from spontaneous hydrolysis and promotes its binding to the 30S ribosomal subunits. Also involved in the hydrolysis of GTP during the formation of the 70S ribosomal complex. The polypeptide is Translation initiation factor IF-2 (infB) (Enterobacter cloacae).